The primary structure comprises 116 residues: Large ribosomal subunit protein bL20 (116 aa).

This sequence belongs to the bacterial ribosomal protein bL20 family.

Its function is as follows. Binds directly to 23S ribosomal RNA and is necessary for the in vitro assembly process of the 50S ribosomal subunit. It is not involved in the protein synthesizing functions of that subunit. The sequence is that of Large ribosomal subunit protein bL20 from Hydrogenobaculum sp. (strain Y04AAS1).